A 391-amino-acid polypeptide reads, in one-letter code: MVKNSYVLFARLCVELPPLPSDESHGEITTVERQFLRNCQMELENLSLKTELPLVYVDESKYWRFIKTVRVLAEVFNNMKTTRTTRKSIIQVLMNPILPSERSTDAMNLFLSTIEKLADLQFSDEDFNQLFVSSRLDLQLENKYNDKVEVKLRKEAEDALARKIKEVVDLTERLLQVEALEHKHKAKLQLRTETETAVAIERDYMRWKAEIFESEFNNQLVLRRESEIALDKERKELEGIKNLLETCFTGQKNLKSQVITWKDKYDQGSSIRKEKEVALSTKKLELEIFKQLAGSYKQDADAMRQERDNALKTVQEIVDEQQPPPSFICPITQDVMKNPHMAADGFTYELEAIQKWINTGHRTSPMTNLKLSHFSFFPNRALRSAIEELGR.

The MIF4G domain occupies Met1 to Glu178. A U-box domain is found at Gln322 to Arg391.

The catalysed reaction is S-ubiquitinyl-[E2 ubiquitin-conjugating enzyme]-L-cysteine + [acceptor protein]-L-lysine = [E2 ubiquitin-conjugating enzyme]-L-cysteine + N(6)-ubiquitinyl-[acceptor protein]-L-lysine.. Its pathway is protein modification; protein ubiquitination. In terms of biological role, functions as an E3 ubiquitin ligase. The polypeptide is U-box domain-containing protein 57 (PUB57) (Arabidopsis thaliana (Mouse-ear cress)).